The primary structure comprises 873 residues: DNA mismatch repair protein MutS (873 aa).

Gly-620–Ser-627 provides a ligand contact to ATP.

This sequence belongs to the DNA mismatch repair MutS family.

Functionally, this protein is involved in the repair of mismatches in DNA. It is possible that it carries out the mismatch recognition step. This protein has a weak ATPase activity. This Ruminiclostridium cellulolyticum (strain ATCC 35319 / DSM 5812 / JCM 6584 / H10) (Clostridium cellulolyticum) protein is DNA mismatch repair protein MutS.